Here is a 217-residue protein sequence, read N- to C-terminus: Transcription antitermination protein NusB (217 aa).

Belongs to the NusB family.

Its function is as follows. Involved in transcription antitermination. Required for transcription of ribosomal RNA (rRNA) genes. Binds specifically to the boxA antiterminator sequence of the ribosomal RNA (rrn) operons. This is Transcription antitermination protein NusB from Microcystis aeruginosa (strain NIES-843 / IAM M-2473).